A 338-amino-acid chain; its full sequence is Solute carrier family 35 member G5 (338 aa).

Positions 1-21 (MAGSHPYFNLPDSTHPSPPSA) are disordered. 9 helical membrane-spanning segments follow: residues 37 to 57 (TNGLLVALLGGGLPAGFVGPL), 67 to 87 (LPSLELLICRCLFHLPIALPL), 105 to 125 (CFCALLNVLSIGCAYSAVQVV), 160 to 180 (CGLLGSILGLIIIVGPGLWTL), 190 to 210 (ALGYVQAFLGGLALSLGLLVY), 221 to 241 (TVAFLFGLVGLLGFVPGLFVL), 250 to 270 (LLSWSCVGAVGILALVSFTCV), 281 to 301 (LVCAVLHSEVVVALILQYYVL), and 305 to 325 (VAPFDITGAGIVLGSIAIITA). The EamA 1 domain maps to 49–174 (LPAGFVGPLS…SILGLIIIVG (126 aa)). An EamA 2 domain is found at 272–325 (YAVTKAHPALVCAVLHSEVVVALILQYYVLHETVAPFDITGAGIVLGSIAIITA).

It belongs to the SLC35G solute transporter family.

It is found in the membrane. This is Solute carrier family 35 member G5 (SLC35G5) from Pan paniscus (Pygmy chimpanzee).